The sequence spans 97 residues: Theromacin (97 aa).

A signal peptide spans 1–22 (MELKSGLSILLCFGICIAVINA). Disulfide bonds link Cys-24–Cys-31, Cys-46–Cys-50, Cys-53–Cys-95, Cys-61–Cys-69, and Cys-79–Cys-81.

In terms of tissue distribution, coelomic liquid (at protein level). Expressed in large fat cells in contact with coelomic cavities, in intestinal epithelia and at the epidermis level.

The protein resides in the secreted. Its function is as follows. Has a bactericidal activity. Active against M.luteus. No activity toward E.coli and F.oxysporum. The chain is Theromacin from Theromyzon tessulatum (Duck leech).